A 412-amino-acid polypeptide reads, in one-letter code: Probable tRNA pseudouridine synthase D (412 aa).

Asp97 functions as the Nucleophile in the catalytic mechanism. One can recognise a TRUD domain in the interval 167–370 (ALPNYYGYQR…YGSYRRARLQ (204 aa)).

It belongs to the pseudouridine synthase TruD family.

It catalyses the reaction uridine(13) in tRNA = pseudouridine(13) in tRNA. Could be responsible for synthesis of pseudouridine from uracil-13 in transfer RNAs. The chain is Probable tRNA pseudouridine synthase D from Pyrobaculum neutrophilum (strain DSM 2338 / JCM 9278 / NBRC 100436 / V24Sta) (Thermoproteus neutrophilus).